Consider the following 463-residue polypeptide: Chromosomal replication initiator protein DnaA (463 aa).

Residues 1–83 (MSTNQIILTD…LQLFQHYNNT (83 aa)) form a domain I, interacts with DnaA modulators region. Residues 83-124 (TIKSIEIITKELPGITQTVIALPTKTFADIGSSELNAENIFS) are domain II. Positions 125 to 343 (TLDVRFTFDN…GALNKVIAHS (219 aa)) are domain III, AAA+ region. The ATP site is built by G171, G173, K174, and T175. Positions 344–463 (NFTLKEITLE…INLLMKILQN (120 aa)) are domain IV, binds dsDNA.

This sequence belongs to the DnaA family. In terms of assembly, oligomerizes as a right-handed, spiral filament on DNA at oriC.

It localises to the cytoplasm. In terms of biological role, plays an essential role in the initiation and regulation of chromosomal replication. ATP-DnaA binds to the origin of replication (oriC) to initiate formation of the DNA replication initiation complex once per cell cycle. Binds the DnaA box (a 9 base pair repeat at the origin) and separates the double-stranded (ds)DNA. Forms a right-handed helical filament on oriC DNA; dsDNA binds to the exterior of the filament while single-stranded (ss)DNA is stabiized in the filament's interior. The ATP-DnaA-oriC complex binds and stabilizes one strand of the AT-rich DNA unwinding element (DUE), permitting loading of DNA polymerase. After initiation quickly degrades to an ADP-DnaA complex that is not apt for DNA replication. Binds acidic phospholipids. The chain is Chromosomal replication initiator protein DnaA from Rickettsia massiliae (strain Mtu5).